An 82-amino-acid chain; its full sequence is Cell division topological specificity factor (82 aa).

It belongs to the MinE family.

Prevents the cell division inhibition by proteins MinC and MinD at internal division sites while permitting inhibition at polar sites. This ensures cell division at the proper site by restricting the formation of a division septum at the midpoint of the long axis of the cell. In Hahella chejuensis (strain KCTC 2396), this protein is Cell division topological specificity factor.